A 515-amino-acid polypeptide reads, in one-letter code: Methionine--tRNA ligase (515 aa).

The short motif at 13–23 (AYPNGKPHIGH) is the 'HIGH' region element. The 'KMSKS' region signature appears at 300-304 (KMSKS). K303 contributes to the ATP binding site.

Belongs to the class-I aminoacyl-tRNA synthetase family. MetG type 2B subfamily. As to quaternary structure, monomer.

The protein resides in the cytoplasm. The catalysed reaction is tRNA(Met) + L-methionine + ATP = L-methionyl-tRNA(Met) + AMP + diphosphate. Its function is as follows. Is required not only for elongation of protein synthesis but also for the initiation of all mRNA translation through initiator tRNA(fMet) aminoacylation. This chain is Methionine--tRNA ligase, found in Brucella melitensis biotype 1 (strain ATCC 23456 / CCUG 17765 / NCTC 10094 / 16M).